A 143-amino-acid polypeptide reads, in one-letter code: MNRRKSREVAMRLLFQTTLNGENLEEALENLKDVRESEEITKEKDYESVDLKDVDIDYVKRIIKGIEENKEEIDEKIKGNLKNWKIERLSKVDLSILRLCTYELKFEEDIPNRVSVNEAIELAKKYSGEKSATFINGVLGKMI.

This sequence belongs to the NusB family.

Functionally, involved in transcription antitermination. Required for transcription of ribosomal RNA (rRNA) genes. Binds specifically to the boxA antiterminator sequence of the ribosomal RNA (rrn) operons. The sequence is that of Transcription antitermination protein NusB from Clostridium botulinum (strain ATCC 19397 / Type A).